The primary structure comprises 370 residues: Anthranilate phosphoribosyltransferase (370 aa).

5-phospho-alpha-D-ribose 1-diphosphate is bound by residues glycine 82, 85-86, threonine 90, 92-95, 110-118, and serine 122; these read GD, NVST, and KHGNRAATS. Residue glycine 82 coordinates anthranilate. Serine 94 provides a ligand contact to Mg(2+). Asparagine 113 serves as a coordination point for anthranilate. An anthranilate-binding site is contributed by arginine 168. Residues aspartate 226 and glutamate 227 each contribute to the Mg(2+) site.

This sequence belongs to the anthranilate phosphoribosyltransferase family. As to quaternary structure, homodimer. It depends on Mg(2+) as a cofactor.

The catalysed reaction is N-(5-phospho-beta-D-ribosyl)anthranilate + diphosphate = 5-phospho-alpha-D-ribose 1-diphosphate + anthranilate. The protein operates within amino-acid biosynthesis; L-tryptophan biosynthesis; L-tryptophan from chorismate: step 2/5. In terms of biological role, catalyzes the transfer of the phosphoribosyl group of 5-phosphorylribose-1-pyrophosphate (PRPP) to anthranilate to yield N-(5'-phosphoribosyl)-anthranilate (PRA). The protein is Anthranilate phosphoribosyltransferase of Methanosarcina mazei (strain ATCC BAA-159 / DSM 3647 / Goe1 / Go1 / JCM 11833 / OCM 88) (Methanosarcina frisia).